The following is a 95-amino-acid chain: Aspartyl/glutamyl-tRNA(Asn/Gln) amidotransferase subunit C (95 aa).

Belongs to the GatC family. As to quaternary structure, heterotrimer of A, B and C subunits.

The catalysed reaction is L-glutamyl-tRNA(Gln) + L-glutamine + ATP + H2O = L-glutaminyl-tRNA(Gln) + L-glutamate + ADP + phosphate + H(+). The enzyme catalyses L-aspartyl-tRNA(Asn) + L-glutamine + ATP + H2O = L-asparaginyl-tRNA(Asn) + L-glutamate + ADP + phosphate + 2 H(+). In terms of biological role, allows the formation of correctly charged Asn-tRNA(Asn) or Gln-tRNA(Gln) through the transamidation of misacylated Asp-tRNA(Asn) or Glu-tRNA(Gln) in organisms which lack either or both of asparaginyl-tRNA or glutaminyl-tRNA synthetases. The reaction takes place in the presence of glutamine and ATP through an activated phospho-Asp-tRNA(Asn) or phospho-Glu-tRNA(Gln). The protein is Aspartyl/glutamyl-tRNA(Asn/Gln) amidotransferase subunit C of Prochlorococcus marinus (strain NATL2A).